Reading from the N-terminus, the 271-residue chain is Centromere protein K (271 aa).

Coiled coils occupy residues 11–44 (DTIT…QNKL) and 102–151 (LRCD…VENQ).

This sequence belongs to the CENP-K/MCM22 family. Component of the CENPA-CAD complex, composed of CENPI, CENPK, CENPL, CENPO, CENPP, CENPQ, CENPR and CENPS. The CENPA-CAD complex interacts with the CENPA-NAC complex, at least composed of CENPA, CENPC, CENPH, CENPM, CENPN, CENPT and CENPU. May interact with Sox6. Highly expressed in testis.

It is found in the nucleus. It localises to the chromosome. The protein localises to the centromere. Its subcellular location is the kinetochore. Component of the CENPA-CAD (nucleosome distal) complex, a complex recruited to centromeres which is involved in assembly of kinetochore proteins, mitotic progression and chromosome segregation. May be involved in incorporation of newly synthesized CENPA into centromeres via its interaction with the CENPA-NAC complex. Acts in coordination with KNL1 to recruit the NDC80 complex to the outer kinetochore. The sequence is that of Centromere protein K (Cenpk) from Mus musculus (Mouse).